Reading from the N-terminus, the 148-residue chain is Small ribosomal subunit protein eS6 (148 aa).

Belongs to the eukaryotic ribosomal protein eS6 family.

In Pyrobaculum islandicum (strain DSM 4184 / JCM 9189 / GEO3), this protein is Small ribosomal subunit protein eS6.